The following is a 310-amino-acid chain: Formyltetrahydrofolate deformylase (310 aa).

Positions 1 to 30 (MGKGSMTAHATPNEPDYPPPPGGPPPPADI) are disordered. Residues 15 to 28 (PDYPPPPGGPPPPA) are compositionally biased toward pro residues. An ACT domain is found at 32–108 (RLLLRCHDRP…VADKFGIDYR (77 aa)). The active site involves D255.

This sequence belongs to the PurU family.

It catalyses the reaction (6R)-10-formyltetrahydrofolate + H2O = (6S)-5,6,7,8-tetrahydrofolate + formate + H(+). It participates in purine metabolism; IMP biosynthesis via de novo pathway; formate from 10-formyl-5,6,7,8-tetrahydrofolate: step 1/1. Its function is as follows. Catalyzes the hydrolysis of 10-formyltetrahydrofolate (formyl-FH4) to formate and tetrahydrofolate (FH4). This Mycobacterium bovis (strain ATCC BAA-935 / AF2122/97) protein is Formyltetrahydrofolate deformylase.